The following is a 375-amino-acid chain: Transaldolase (375 aa).

K145 serves as the catalytic Schiff-base intermediate with substrate.

Belongs to the transaldolase family. Type 2 subfamily.

The protein localises to the cytoplasm. The catalysed reaction is D-sedoheptulose 7-phosphate + D-glyceraldehyde 3-phosphate = D-erythrose 4-phosphate + beta-D-fructose 6-phosphate. Its pathway is carbohydrate degradation; pentose phosphate pathway; D-glyceraldehyde 3-phosphate and beta-D-fructose 6-phosphate from D-ribose 5-phosphate and D-xylulose 5-phosphate (non-oxidative stage): step 2/3. In terms of biological role, transaldolase is important for the balance of metabolites in the pentose-phosphate pathway. The polypeptide is Transaldolase (Mycobacterium leprae (strain Br4923)).